We begin with the raw amino-acid sequence, 293 residues long: Caspase-6 (293 aa).

Residues 1–20 (MSSEPPPRRARGPGEEQNMT) form a disordered region. Residues 1–23 (MSSEPPPRRARGPGEEQNMTEID) constitute a propeptide that is removed on maturation. The tri-arginine exosite stretch occupies residues 42–44 (KRR). Residue serine 79 is modified to Phosphoserine. Histidine 121 is an active-site residue. The segment at 125–142 (NHIYAYDAKIEIQTLTGL) is 130's region. The active site involves cysteine 163. Positions 180 to 193 (HRTDTPDANLTQVD) are excised as a propeptide. At serine 257 the chain carries Phosphoserine. Residues cysteine 264 and cysteine 277 are each lipidated (S-palmitoyl cysteine).

This sequence belongs to the peptidase C14A family. As to quaternary structure, heterotetramer that consists of two anti-parallel arranged heterodimers, each one formed by a 18 kDa (p18) and a 11 kDa (p11) subunits. Interacts with BIRC6/bruce. Interacts with RIPK3. In terms of assembly, heterotetramer that consists of two anti-parallel arranged heterodimers, each one formed by a 18 kDa (Caspase-6 subunit p18) and a 11 kDa (Caspase-6 subunit p11) subunit. Post-translationally, phosphorylated by NUAK1; phosphorylation inhibits self-activation. Phosphorylation at Ser-257 by AMP-activated protein kinase (PRKAA1 or PRKAA2) inhibits autocleavage, preventing caspase activation, thereby preventing hepatocyte apoptosis. In terms of processing, palmitoylation by ZDHHC17 blocks dimerization and subsequent activation, leading to inhibit the cysteine protease activity. Can be cleaved and activated by different caspases, depending on the context. Cleaved and activated by caspase-8 (CASP8) and subsequently by caspase-3 (CASP3). Can also undergo autoactivation by mediating autocleavage at Asp-179 and Asp-193, while it is not able to cleave its N-terminal disordered prodomain. Cleaved and activated by CASP1, possibly in the context of inflammation.

The protein resides in the cytoplasm. Its subcellular location is the nucleus. It carries out the reaction Strict requirement for Asp at position P1 and has a preferred cleavage sequence of Val-Glu-His-Asp-|-.. Its activity is regulated as follows. During activation, the N-terminal disordered prodomain is removed by cleavage. Concomitantly, double cleavage gives rise to a large 18-kDa and a small 11-kDa subunit. The two large and two small subunits then assemble to form the active CASP6 complex. Can be cleaved and activated by different caspases, depending on the context. Cleaved and activated by caspase-8 (CASP8) and subsequently by caspase-3 (CASP3). Can also undergo autoactivation by mediating autocleavage at Asp-179 and Asp-193, while it is not able to cleave its N-terminal disordered prodomain. Intramolecular cleavage at Asp-193 is a prerequisite for CASP6 self-activation. Cleaved and activated by CASP1 in neurons, possibly in the context of inflammation. Phosphorylation at Ser-257 inhibits autocleavage, preventing caspase activation. Functionally, cysteine protease that plays essential roles in programmed cell death, axonal degeneration, development and innate immunity. Acts as a non-canonical executioner caspase during apoptosis: localizes in the nucleus and cleaves the nuclear structural protein NUMA1 and lamin A/LMNA thereby inducing nuclear shrinkage and fragmentation. Lamin-A/LMNA cleavage is required for chromatin condensation and nuclear disassembly during apoptotic execution. Acts as a regulator of liver damage by promoting hepatocyte apoptosis: in absence of phosphorylation by AMP-activated protein kinase (AMPK), catalyzes cleavage of BID, leading to cytochrome c release, thereby participating in nonalcoholic steatohepatitis. Cleaves PARK7/DJ-1 in cells undergoing apoptosis. Involved in intrinsic apoptosis by mediating cleavage of RIPK1. Furthermore, cleaves many transcription factors such as NF-kappa-B and cAMP response element-binding protein/CREBBP. Cleaves phospholipid scramblase proteins XKR4 and XKR9. In addition to apoptosis, involved in different forms of programmed cell death. Plays an essential role in defense against viruses by acting as a central mediator of the ZBP1-mediated pyroptosis, apoptosis, and necroptosis (PANoptosis), independently of its cysteine protease activity. PANoptosis is a unique inflammatory programmed cell death, which provides a molecular scaffold that allows the interactions and activation of machinery required for inflammasome/pyroptosis, apoptosis and necroptosis. Mechanistically, interacts with RIPK3 and enhances the interaction between RIPK3 and ZBP1, leading to ZBP1-mediated inflammasome activation and cell death. Plays an essential role in axon degeneration during axon pruning which is the remodeling of axons during neurogenesis but not apoptosis. Regulates B-cell programs both during early development and after antigen stimulation. This is Caspase-6 from Bos taurus (Bovine).